A 151-amino-acid chain; its full sequence is Ribosomal RNA large subunit methyltransferase H (151 aa).

S-adenosyl-L-methionine-binding positions include Leu73, Gly100, and 119-124 (LSKMTL).

Belongs to the RNA methyltransferase RlmH family. In terms of assembly, homodimer.

Its subcellular location is the cytoplasm. The enzyme catalyses pseudouridine(1915) in 23S rRNA + S-adenosyl-L-methionine = N(3)-methylpseudouridine(1915) in 23S rRNA + S-adenosyl-L-homocysteine + H(+). Its function is as follows. Specifically methylates the pseudouridine at position 1915 (m3Psi1915) in 23S rRNA. The sequence is that of Ribosomal RNA large subunit methyltransferase H from Campylobacter lari (strain RM2100 / D67 / ATCC BAA-1060).